We begin with the raw amino-acid sequence, 354 residues long: UDP-N-acetylglucosamine--N-acetylmuramyl-(pentapeptide) pyrophosphoryl-undecaprenol N-acetylglucosamine transferase (354 aa).

Residues 15–17, Asn127, Arg163, Ser191, Ile242, 261–266, and Gln286 contribute to the UDP-N-acetyl-alpha-D-glucosamine site; these read TGG and ALTVSE.

The protein belongs to the glycosyltransferase 28 family. MurG subfamily.

The protein resides in the cell inner membrane. It carries out the reaction di-trans,octa-cis-undecaprenyl diphospho-N-acetyl-alpha-D-muramoyl-L-alanyl-D-glutamyl-meso-2,6-diaminopimeloyl-D-alanyl-D-alanine + UDP-N-acetyl-alpha-D-glucosamine = di-trans,octa-cis-undecaprenyl diphospho-[N-acetyl-alpha-D-glucosaminyl-(1-&gt;4)]-N-acetyl-alpha-D-muramoyl-L-alanyl-D-glutamyl-meso-2,6-diaminopimeloyl-D-alanyl-D-alanine + UDP + H(+). The protein operates within cell wall biogenesis; peptidoglycan biosynthesis. Its function is as follows. Cell wall formation. Catalyzes the transfer of a GlcNAc subunit on undecaprenyl-pyrophosphoryl-MurNAc-pentapeptide (lipid intermediate I) to form undecaprenyl-pyrophosphoryl-MurNAc-(pentapeptide)GlcNAc (lipid intermediate II). The polypeptide is UDP-N-acetylglucosamine--N-acetylmuramyl-(pentapeptide) pyrophosphoryl-undecaprenol N-acetylglucosamine transferase (Pasteurella multocida (strain Pm70)).